Reading from the N-terminus, the 1480-residue chain is Cystic fibrosis transmembrane conductance regulator (1480 aa).

The Cytoplasmic portion of the chain corresponds to 1–77; it reads MQRSPLEKAS…KLINALRRCF (77 aa). A helical membrane pass occupies residues 78 to 98; sequence FWRFMFYGILLYLGEVTKAVQ. The 285-residue stretch at 81–365 folds into the ABC transmembrane type-1 1 domain; sequence FMFYGILLYL…WAVQTWYDSL (285 aa). Over 99-122 the chain is Extracellular; that stretch reads PLLLGRIIASYDPDNKTERSIAIY. A helical membrane pass occupies residues 123 to 146; that stretch reads LGIGLCLLFIVRTLLLHPAIFGLH. Topologically, residues 147–195 are cytoplasmic; that stretch reads HIGMQMRIAMFSLIYKKTLKLSSRVLDKISIGQLVSLLSNNLNKFDEGL. A helical transmembrane segment spans residues 196-216; it reads ALAHFVWIAPLQVALLMGLIW. Residues 217–222 are Extracellular-facing; sequence ELLQAS. A helical membrane pass occupies residues 223–243; that stretch reads AFCGLGFLIVLALFQAGLGRM. Residues 244-298 lie on the Cytoplasmic side of the membrane; the sequence is MMKYRDQRAGKINERLVITSEMIENIQSVKAYCWEEAMEKMIENLRQTELKLTRK. Residues 299–319 form a helical membrane-spanning segment; the sequence is AAYVRYFNSSAFFFSGFFVVF. The Extracellular portion of the chain corresponds to 320-339; that stretch reads LSVLPYALIKGIVLRKIFTT. The helical transmembrane segment at 340–358 threads the bilayer; it reads ISFCIVLRMAVTRQFPWAV. Topologically, residues 359-858 are cytoplasmic; that stretch reads QTWYDSLGAI…YLRYITLHKS (500 aa). ATP is bound by residues Trp401, Ser434, 458–465, and Gln493; that span reads GSTGAGKT. The ABC transporter 1 domain occupies 423–646; it reads NGDDNLFFSN…RPDFSSKLMG (224 aa). Cys524 is lipidated: S-palmitoyl cysteine. 2 positions are modified to phosphoserine: Ser549 and Ser660. The interval 654–831 is disordered R region; sequence SSERRNSILT…EEINEEDLKE (178 aa). Ser670 carries the post-translational modification Phosphoserine; by PKA. Residue Ser686 is modified to Phosphoserine. Residue Lys688 forms a Glycyl lysine isopeptide (Lys-Gly) (interchain with G-Cter in ubiquitin) linkage. Phosphoserine is present on residues Ser700 and Ser712. Thr717 carries the phosphothreonine modification. Residues Ser737, Ser753, Ser768, Ser790, Ser795, and Ser813 each carry the phosphoserine modification. Residues 859 to 879 traverse the membrane as a helical segment; sequence LIFVLIWCLVIFLAEVAASLV. Positions 859–1155 constitute an ABC transmembrane type-1 2 domain; sequence LIFVLIWCLV…AVNSSIDVDS (297 aa). Residues 880–918 are Extracellular-facing; it reads VLWFLGNTPFQDKGNSTYSRNNSYAVIITNTSSYYVFYI. N-linked (GlcNAc...) asparagine glycans are attached at residues Asn894, Asn900, and Asn909. The discontinuously helical transmembrane segment at 919–939 threads the bilayer; it reads YVGVADTLLALGFFRGLPLVH. The Cytoplasmic portion of the chain corresponds to 940–990; the sequence is TLITVSKILHHKMLHSVLQAPMSTLNTLKAGGILNRFSKDIAILDDLLPLT. A helical membrane pass occupies residues 991-1011; the sequence is IFDFIQLLLIVIGAIAVVSVL. The Extracellular portion of the chain corresponds to 1012 to 1013; that stretch reads QP. A helical membrane pass occupies residues 1014-1034; the sequence is YILLATVPVIAAFILLRAYFL. Residues 1035–1095 lie on the Cytoplasmic side of the membrane; the sequence is QTSQQLKQLE…TANWFLYLAT (61 aa). Residues 1096–1116 traverse the membrane as a helical segment; the sequence is LRWFQMRIEIIFVIFFIAVTF. At 1117-1130 the chain is on the extracellular side; that stretch reads ISILTTGEGEGTVG. Residues 1131-1151 form a helical membrane-spanning segment; the sequence is IILTLAMNIMSTLQWAVNSSI. The Cytoplasmic segment spans residues 1152 to 1480; sequence DVDSLMRSVS…TEEEVQETRL (329 aa). Residues 1210–1443 enclose the ABC transporter 2 domain; that stretch reads MTIKDLTAKY…KSLFQQAISH (234 aa). Residues Tyr1219 and 1244–1251 each bind ATP; that span reads GRTGSGKS. Residues 1386–1480 are interaction with GORASP2; it reads RALKQAFADC…TEEEVQETRL (95 aa). Cys1395 carries S-palmitoyl cysteine lipidation. 2 positions are modified to phosphoserine: Ser1444 and Ser1456. A disordered region spans residues 1452-1480; that stretch reads HRNSSKYKSPPQIASLKEETEEEVQETRL. Residues 1470 to 1480 show a composition bias toward acidic residues; sequence ETEEEVQETRL. Residues 1478-1480 carry the PDZ-binding motif; it reads TRL.

It belongs to the ABC transporter superfamily. ABCC family. CFTR transporter (TC 3.A.1.202) subfamily. Monomer; does not require oligomerization for channel activity. May form oligomers in the membrane. Interacts with SLC26A3, SLC26A6 and NHERF1. Interacts with SHANK2. Interacts with MYO6. Interacts (via C-terminus) with GOPC (via PDZ domain); this promotes CFTR internalization and thereby decreases channel activity. Interacts with SLC4A7 through NHERF1. Found in a complex with MYO5B and RAB11A. Interacts with ANO1. Interacts with SLC26A8. Interacts with AHCYL1; the interaction increases CFTR activity. Interacts with CSE1L. The core-glycosylated form interacts with GORASP2 (via PDZ GRASP-type 1 domain) in respone to ER stress. Interacts with MARCHF2; the interaction leads to CFTR ubiqtuitination and degradation. Interacts with ADGRG2. In terms of processing, N-glycosylated. Post-translationally, phosphorylated; cAMP treatment promotes phosphorylation and activates the channel. Dephosphorylation decreases the ATPase activity (in vitro). Phosphorylation at PKA sites activates the channel. Phosphorylation at PKC sites enhances the response to phosphorylation by PKA. Phosphorylated by AMPK; this inhibits channel activity. Ubiquitinated, leading to its degradation in the lysosome. Deubiquitination by USP10 in early endosomes enhances its endocytic recycling to the cell membrane. Ubiquitinated by RNF185 during ER stress. Ubiquitinated by MARCHF2.

It localises to the apical cell membrane. The protein localises to the early endosome membrane. It is found in the cell membrane. Its subcellular location is the recycling endosome membrane. The protein resides in the endoplasmic reticulum membrane. It localises to the nucleus. The catalysed reaction is ATP + H2O + closed Cl(-) channel = ADP + phosphate + open Cl(-) channel.. It catalyses the reaction chloride(in) = chloride(out). It carries out the reaction hydrogencarbonate(in) = hydrogencarbonate(out). The enzyme catalyses ATP + H2O = ADP + phosphate + H(+). Its function is as follows. Epithelial ion channel that plays an important role in the regulation of epithelial ion and water transport and fluid homeostasis. Mediates the transport of chloride ions across the cell membrane. Possesses an intrinsic ATPase activity and utilizes ATP to gate its channel; the passive flow of anions through the channel is gated by cycles of ATP binding and hydrolysis by the ATP-binding domains. The ion channel is also permeable to HCO(3)(-); selectivity depends on the extracellular chloride concentration. Exerts its function also by modulating the activity of other ion channels and transporters. Contributes to the regulation of the pH and the ion content of the epithelial fluid layer. Modulates the activity of the epithelial sodium channel (ENaC) complex, in part by regulating the cell surface expression of the ENaC complex. May regulate bicarbonate secretion and salvage in epithelial cells by regulating the transporter SLC4A7. Can inhibit the chloride channel activity of ANO1. Plays a role in the chloride and bicarbonate homeostasis during sperm epididymal maturation and capacitation. This is Cystic fibrosis transmembrane conductance regulator from Ateles geoffroyi (Black-handed spider monkey).